The chain runs to 348 residues: D-alanine--D-alanine ligase (348 aa).

The ATP-grasp domain maps to 132 to 334; that stretch reads KRVLESIGIP…YPDLIEELVT (203 aa). 162–217 is a binding site for ATP; the sequence is LARLTFPIFVKPANMGSSVGISKAQTKVELRKAIQLALTYDSRVLIEQGVVAREIE. The Mg(2+) site is built by Asp288, Glu301, and Asn303.

Belongs to the D-alanine--D-alanine ligase family. Mg(2+) is required as a cofactor. It depends on Mn(2+) as a cofactor.

The protein localises to the cytoplasm. It carries out the reaction 2 D-alanine + ATP = D-alanyl-D-alanine + ADP + phosphate + H(+). Its pathway is cell wall biogenesis; peptidoglycan biosynthesis. Functionally, cell wall formation. This is D-alanine--D-alanine ligase from Streptococcus pyogenes serotype M6 (strain ATCC BAA-946 / MGAS10394).